The primary structure comprises 138 residues: Probable DNA-directed RNA polymerases I, II, and III subunit RPABC2 (138 aa).

2 stretches are compositionally biased toward acidic residues: residues 1 to 27 and 35 to 46; these read MADDDDYQDMDNDDFVDDNEMEDVIEE and EEEDDDNNVDEN. Residues 1-46 form a disordered region; the sequence is MADDDDYQDMDNDDFVDDNEMEDVIEEEQQRPDHEEEDDDNNVDEN.

It belongs to the archaeal Rpo6/eukaryotic RPB6 RNA polymerase subunit family. Component of the RNA polymerase I (Pol I), RNA polymerase II (Pol II) and RNA polymerase III (Pol III) complexes consisting of at least 13, 12 and 17 subunits, respectively.

The protein localises to the nucleus. Functionally, DNA-dependent RNA polymerases catalyze the transcription of DNA into RNA using the four ribonucleoside triphosphates as substrates. Common component of RNA polymerases I, II and III which synthesize ribosomal RNA precursors, mRNA precursors and many functional non-coding RNAs, and small RNAs, such as 5S rRNA and tRNAs, respectively. Pol II is the central component of the basal RNA polymerase II transcription machinery. Pols are composed of mobile elements that move relative to each other. In Pol II, RPB6 is part of the clamp element and together with parts of RPB1 and RPB2 forms a pocket to which the RPB4-RPB7 subcomplex binds. In Caenorhabditis briggsae, this protein is Probable DNA-directed RNA polymerases I, II, and III subunit RPABC2.